Here is a 385-residue protein sequence, read N- to C-terminus: ATP phosphoribosyltransferase regulatory subunit (385 aa).

It belongs to the class-II aminoacyl-tRNA synthetase family. HisZ subfamily. In terms of assembly, heteromultimer composed of HisG and HisZ subunits.

It localises to the cytoplasm. It participates in amino-acid biosynthesis; L-histidine biosynthesis; L-histidine from 5-phospho-alpha-D-ribose 1-diphosphate: step 1/9. Functionally, required for the first step of histidine biosynthesis. May allow the feedback regulation of ATP phosphoribosyltransferase activity by histidine. This chain is ATP phosphoribosyltransferase regulatory subunit, found in Bordetella petrii (strain ATCC BAA-461 / DSM 12804 / CCUG 43448).